The sequence spans 626 residues: uncharacterized protein (626 aa).

This is an uncharacterized protein from Dictyostelium discoideum (Social amoeba).